We begin with the raw amino-acid sequence, 312 residues long: Ribose-phosphate pyrophosphokinase (312 aa).

Residues Asp38–Glu40 and Arg97–Gln98 contribute to the ATP site. Residues His131 and Asp170 each coordinate Mg(2+). Lys193 is a catalytic residue. D-ribose 5-phosphate-binding positions include Arg195, Asp219, and Asp223–Thr227.

It belongs to the ribose-phosphate pyrophosphokinase family. Class I subfamily. Homohexamer. Mg(2+) is required as a cofactor.

Its subcellular location is the cytoplasm. It carries out the reaction D-ribose 5-phosphate + ATP = 5-phospho-alpha-D-ribose 1-diphosphate + AMP + H(+). It functions in the pathway metabolic intermediate biosynthesis; 5-phospho-alpha-D-ribose 1-diphosphate biosynthesis; 5-phospho-alpha-D-ribose 1-diphosphate from D-ribose 5-phosphate (route I): step 1/1. Its function is as follows. Involved in the biosynthesis of the central metabolite phospho-alpha-D-ribosyl-1-pyrophosphate (PRPP) via the transfer of pyrophosphoryl group from ATP to 1-hydroxyl of ribose-5-phosphate (Rib-5-P). This chain is Ribose-phosphate pyrophosphokinase, found in Leptospira interrogans serogroup Icterohaemorrhagiae serovar copenhageni (strain Fiocruz L1-130).